The following is a 151-amino-acid chain: Nucleoside diphosphate kinase (151 aa).

ATP is bound by residues lysine 11, phenylalanine 59, arginine 87, threonine 93, arginine 104, and asparagine 114. Histidine 117 functions as the Pros-phosphohistidine intermediate in the catalytic mechanism.

The protein belongs to the NDK family. Mg(2+) serves as cofactor.

It catalyses the reaction a 2'-deoxyribonucleoside 5'-diphosphate + ATP = a 2'-deoxyribonucleoside 5'-triphosphate + ADP. It carries out the reaction a ribonucleoside 5'-diphosphate + ATP = a ribonucleoside 5'-triphosphate + ADP. Major role in the synthesis of nucleoside triphosphates other than ATP. The ATP gamma phosphate is transferred to the NDP beta phosphate via a ping-pong mechanism, using a phosphorylated active-site intermediate. The chain is Nucleoside diphosphate kinase (NDK1) from Eremothecium gossypii (strain ATCC 10895 / CBS 109.51 / FGSC 9923 / NRRL Y-1056) (Yeast).